Consider the following 528-residue polypeptide: GMP synthase [glutamine-hydrolyzing] (528 aa).

One can recognise a Glutamine amidotransferase type-1 domain in the interval 13–204 (AIVILDFGSQ…VYHVCGCDPD (192 aa)). Catalysis depends on cysteine 90, which acts as the Nucleophile. Active-site residues include histidine 178 and glutamate 180. A GMPS ATP-PPase domain is found at 205–403 (WTTAAFIDEA…LGLPEEIVRR (199 aa)). 232–238 (SGGVDSS) provides a ligand contact to ATP.

As to quaternary structure, homodimer.

It catalyses the reaction XMP + L-glutamine + ATP + H2O = GMP + L-glutamate + AMP + diphosphate + 2 H(+). The protein operates within purine metabolism; GMP biosynthesis; GMP from XMP (L-Gln route): step 1/1. In terms of biological role, catalyzes the synthesis of GMP from XMP. This chain is GMP synthase [glutamine-hydrolyzing], found in Synechococcus sp. (strain CC9605).